A 914-amino-acid polypeptide reads, in one-letter code: Solute carrier family 12 member 9 (914 aa).

Topologically, residues 1 to 36 are cytoplasmic; the sequence is MASESSPLLAYRLLGEEGVALPANGAGGPGGASARK. Residue Ser-6 is modified to Phosphoserine. The helical transmembrane segment at 37–57 threads the bilayer; that stretch reads LSTFLGVVVPTVLSMFSIVVF. Topologically, residues 58 to 72 are extracellular; sequence LRIGFVVGHAGLLQA. Residues 73-93 form a helical membrane-spanning segment; sequence LAMLLVAYFILALTVLSVCAI. Over 94 to 119 the chain is Cytoplasmic; sequence ATNGAVQGGGAYFMISRTLGPEVGGS. The chain crosses the membrane as a helical span at residues 120–140; the sequence is IGLMFYLANVCGCAVSLLGLV. The Extracellular segment spans residues 141-167; that stretch reads ESVLDVFGADATGPSGLRVLPQGYGWN. Residues 168-188 form a helical membrane-spanning segment; it reads LLYGSLLLGLVGGVCTLGAGL. The Cytoplasmic segment spans residues 189–193; that stretch reads YARAS. Residues 194-214 form a helical membrane-spanning segment; sequence FLTFLLVSGSLASVLISFVAV. Residues 215-262 lie on the Extracellular side of the membrane; sequence GPRDIRLTPRPGPNGSSLPPRFGHFTGFNSSTLKDNLGAGYAEDYTTG. 2 N-linked (GlcNAc...) asparagine glycosylation sites follow: Asn-228 and Asn-243. A helical membrane pass occupies residues 263-283; sequence AVMNFASVFAVLFNGCTGIMA. Over 284-297 the chain is Cytoplasmic; sequence GANMSGELKDPSRA. Residues 298 to 318 form a helical membrane-spanning segment; the sequence is IPLGTIVAVAYTFFVYVLLFF. Topologically, residues 319–338 are extracellular; it reads LSSFTCDRTLLQEDYGFFRA. Residues 339–359 traverse the membrane as a helical segment; it reads ISLWPPLVLIGIYATALSASM. At 360 to 390 the chain is on the cytoplasmic side; the sequence is SSLIGASRILHALARDDLFGVILAPAKVVSR. A helical membrane pass occupies residues 391-411; it reads GGNPWAAVLYSWGLVQLVLLA. Topologically, residues 412–416 are extracellular; the sequence is GKLNT. A helical transmembrane segment spans residues 417–437; sequence LAAVVTVFYLVAYAAVDLSCL. At 438 to 466 the chain is on the cytoplasmic side; the sequence is SLEWASAPNFRPTFSLFSWHTCLLGVASC. The chain crosses the membrane as a helical span at residues 467–487; that stretch reads LLMMFLISPGAAGGSLLLMGL. Residues 488 to 740 lie on the Extracellular side of the membrane; the sequence is LAALLTARGG…LLRPRGGPGY (253 aa). The segment at 642-678 is disordered; sequence LTDPAFSEPADSTREGSSPALSTLFPPPRAPGSPRAL. The chain crosses the membrane as a helical span at residues 741 to 761; that stretch reads VDVCGLFLLQMATILGMVPAW. At 762–914 the chain is on the cytoplasmic side; the sequence is HSARLRIFLC…GVTPVTCTDL (153 aa). The segment at 844 to 863 is disordered; that stretch reads QQGRGTGGGPGGPEGGDAEG. Over residues 847–858 the composition is skewed to gly residues; that stretch reads RGTGGGPGGPEG.

It belongs to the SLC12A transporter family. Interacts with SLC12A1. As to expression, highly expressed in placenta, brain and kidney. Lower expression in lung, liver and heart.

It localises to the cell membrane. The protein resides in the lysosome membrane. In terms of biological role, may be an inhibitor of SLC12A1. Seems to correspond to a subunit of a multimeric transport system and thus, additional subunits may be required for its function. May play a role in lysosomal ion flux and osmoregulation. This chain is Solute carrier family 12 member 9 (SLC12A9), found in Homo sapiens (Human).